Here is a 153-residue protein sequence, read N- to C-terminus: MATACVKSLESVQCGTCEKTIANGTEFYALLFDKHPDLRHYFKGNENLTGADVKKSDHFKKQGQRLLLACHVLAHLENDPASFKAYAREIVDPHLRMSVHLEPKLWSEFWPIWLDYLSTKESVDDATKNAWLALGKKFSDECLDHLKNLGQPH.

The Globin domain occupies 1–147 (MATACVKSLE…FSDECLDHLK (147 aa)). A heme b-binding site is contributed by histidine 94.

It belongs to the globin family. Homodimer; disulfide-linked. In terms of processing, the N-terminus is blocked. In terms of tissue distribution, body wall globin is localized in cellular compartments belonging to the hypodermis, the dorsal, ventral and lateral cords, the nerve ring, and body wall muscle.

Its subcellular location is the cytoplasm. Its function is as follows. High oxygen affinity. Probably supplies oxygen needed for muscle activity. In Ascaris suum (Pig roundworm), this protein is Myoglobin.